Here is a 514-residue protein sequence, read N- to C-terminus: Extracellular exo-inulinase inuE (514 aa).

A signal peptide spans 1–18; that stretch reads MRAFLALIFLTFVMNVES. Residues 33–34 and Gln52 each bind substrate; that span reads ND. Asp34 serves as the catalytic Nucleophile. Asn56 carries an N-linked (GlcNAc...) asparagine glycan. Trp60 and Ser95 together coordinate substrate. Asn104 and Asn110 each carry an N-linked (GlcNAc...) asparagine glycan. 162 to 163 provides a ligand contact to substrate; the sequence is RD. Residues Asn197 and Asn203 are each glycosylated (N-linked (GlcNAc...) asparagine). Substrate is bound by residues Glu214 and Trp300. The active-site Proton donor/acceptor is Glu214. N-linked (GlcNAc...) asparagine glycosylation is found at Asn357, Asn371, Asn389, and Asn422.

It belongs to the glycosyl hydrolase 32 family.

Its subcellular location is the secreted. The enzyme catalyses Hydrolysis of terminal, non-reducing (2-&gt;1)- and (2-&gt;6)-linked beta-D-fructofuranose residues in fructans.. Functionally, exo-inulinase involved in utilization of the plant storage polymer inulin, consisting of fructooligosaccharides with a degree of polymerization (DP) value from 2 to 60. Splits off terminal fructose units successively from the non-reducing end of the inulin molecule. The sequence is that of Extracellular exo-inulinase inuE from Meyerozyma guilliermondii (Yeast).